Here is a 183-residue protein sequence, read N- to C-terminus: Shikimate kinase (183 aa).

Residue 14 to 19 (GAGKTT) participates in ATP binding. A Mg(2+)-binding site is contributed by T18. Residues D36, R60, and G82 each contribute to the substrate site. ATP is bound at residue R120. A substrate-binding site is contributed by R139. Residue Q156 participates in ATP binding.

Belongs to the shikimate kinase family. As to quaternary structure, monomer. Mg(2+) serves as cofactor.

It localises to the cytoplasm. It carries out the reaction shikimate + ATP = 3-phosphoshikimate + ADP + H(+). It functions in the pathway metabolic intermediate biosynthesis; chorismate biosynthesis; chorismate from D-erythrose 4-phosphate and phosphoenolpyruvate: step 5/7. Its function is as follows. Catalyzes the specific phosphorylation of the 3-hydroxyl group of shikimic acid using ATP as a cosubstrate. In Thiobacillus denitrificans (strain ATCC 25259 / T1), this protein is Shikimate kinase.